A 991-amino-acid polypeptide reads, in one-letter code: Integrator complex subunit 10-like protein (991 aa).

Disordered stretches follow at residues 180-217 (NNNNNNNNNNNNNNNNKNNSNNNNKNNNNNNDDSNNNN), 310-345 (YFDEDDYDQKQQQQQQQQQQQQEQKGSKEDEEDIEK), 462-484 (NDYFDRNSEGNGGDENDENSQES), 549-614 (NSSS…GQQP), and 961-991 (EKQYSSSNTANNSGVNNSPIHNQNTDVEMNE). The segment covering 319-333 (KQQQQQQQQQQQQEQ) has biased composition (low complexity). Positions 473–484 (GGDENDENSQES) are enriched in acidic residues. Low complexity predominate over residues 549-609 (NSSSGSNGII…NNNNNNNNNN (61 aa)). Positions 964 to 991 (YSSSNTANNSGVNNSPIHNQNTDVEMNE) are enriched in polar residues.

It is found in the nucleus. Functionally, may be a component of the Integrator complex, a complex involved in the small nuclear RNAs (snRNA) U1 and U2 transcription and in their 3'-box-dependent processing. The protein is Integrator complex subunit 10-like protein of Dictyostelium discoideum (Social amoeba).